Here is a 229-residue protein sequence, read N- to C-terminus: Type III pantothenate kinase (229 aa).

6 to 13 (NIGNSRQH) provides a ligand contact to ATP. Substrate contacts are provided by residues tyrosine 77 and 81–84 (GIDR). The Proton acceptor role is filled by aspartate 83. Residue aspartate 103 participates in K(+) binding. An ATP-binding site is contributed by threonine 106. Position 159 (threonine 159) interacts with substrate.

Belongs to the type III pantothenate kinase family. As to quaternary structure, homodimer. It depends on NH4(+) as a cofactor. K(+) is required as a cofactor.

It is found in the cytoplasm. The catalysed reaction is (R)-pantothenate + ATP = (R)-4'-phosphopantothenate + ADP + H(+). It functions in the pathway cofactor biosynthesis; coenzyme A biosynthesis; CoA from (R)-pantothenate: step 1/5. Functionally, catalyzes the phosphorylation of pantothenate (Pan), the first step in CoA biosynthesis. This chain is Type III pantothenate kinase, found in Gloeobacter violaceus (strain ATCC 29082 / PCC 7421).